Reading from the N-terminus, the 394-residue chain is DNA repair protein brc-2 (394 aa).

Basic and acidic residues predominate over residues 1-12; the sequence is MGDSSKKVKDSF. Disordered stretches follow at residues 1-30 and 56-136; these read MGDS…VPIS and MLNS…EKKK. Residues 1–60 form an interaction with rad-51 region; that stretch reads MGDSSKKVKDSFDTISEPDSFDEPKGVPISMEPVFSTAAGIRIDVKQESIDKSKKMLNSD. The segment at 28–62 is BRCA2 repeat-like region; sequence PISMEPVFSTAAGIRIDVKQESIDKSKKMLNSDLK. Residues 56 to 73 show a composition bias toward low complexity; it reads MLNSDLKSKSSSKGGFSS. The tract at residues 60–89 is interaction with rad-51-DNA complexes; sequence DLKSKSSSKGGFSSPLVRKNNGSSAFVSPF. Residues 124 to 134 are compositionally biased toward basic residues; it reads KKSKKHSKKEK. The required for ssDNA binding stretch occupies residues 371-389; that stretch reads WKDFGSYLKHKEDKKKRRS.

Interacts (via N-terminus) with rad-51; regulates rad-51 recruitment to sites of DNA double strand breaks. In terms of tissue distribution, expressed in the germline, with highest expression in cells undergoing oogenesis.

The protein localises to the nucleus. The protein resides in the chromosome. Its function is as follows. Required for the homologous recombination repair of DNA double strand breaks, thereby playing a role in chromosome integrity. Acts by targeting rad-51 to sites of DNA damage and stabilizing rad-51-DNA filaments by blocking ATP hydrolysis catalyzed by rad-51. Promotes rad-51 mediated displacement-loop (D-loop) formation during strand invasion between the invading single-stranded DNA (ssDNA) and the homologous duplex DNA. Also functions independently of rad-51 in DNA double-strand break (DSB) repair by promoting DNA single-strand annealing (SSA) when the homologous recombination (HR) and non-homologous end joining (NHEJ) pathways are compromised. Binds selectively to single-stranded (ssDNA) via its C-terminus. Involved in telomere maintenance and replicative senescence. This chain is DNA repair protein brc-2, found in Caenorhabditis elegans.